The primary structure comprises 535 residues: Large neutral amino acids transporter small subunit 2 (535 aa).

Residues 1-17 (MEEGARHRNNTEKKHPG) show a composition bias toward basic and acidic residues. A disordered region spans residues 1-30 (MEEGARHRNNTEKKHPGGGESDASPEAGSG). Over 1-44 (MEEGARHRNNTEKKHPGGGESDASPEAGSGGGGVALKKEIGLVS) the chain is Cytoplasmic. A Phosphoserine modification is found at S29. Residues 45–65 (ACGIIVGNIIGSGIFVSPKGV) form a helical membrane-spanning segment. I53 serves as a coordination point for L-leucine. Over 66–73 (LENAGSVG) the chain is Extracellular. A helical transmembrane segment spans residues 74–95 (LALIVWIVTGFITVVGALCYAE). Residues 96–116 (LGVTIPKSGGDYSYVKDIFGG) lie on the Cytoplasmic side of the membrane. The chain crosses the membrane as a helical span at residues 117–149 (LAGFLRLWIAVLVIYPTNQAVIALTFSNYVLQP). An L-tryptophan-binding site is contributed by N134. At 150 to 157 (LFPTCFPP) the chain is on the extracellular side. Residues 158-178 (ESGLRLLAAICLLLLTWVNCS) form a helical membrane-spanning segment. At 179–181 (SVR) the chain is on the cytoplasmic side. Residues 182 to 210 (WATRVQDIFTAGKLLALALIIIMGIVQIC) form a helical membrane-spanning segment. The Extracellular segment spans residues 211 to 230 (KGEYFWLEPKNAFENFQEPD). Residues 231–252 (IGLVALAFLQGSFAYGGWNFLN) form a helical membrane-spanning segment. G246 is an L-leucine binding site. The Cytoplasmic portion of the chain corresponds to 253–265 (YVTEELVDPYKNL). Residues 266–287 (PRAIFISIPLVTFVYVFANVAY) traverse the membrane as a helical segment. At 288 to 312 (VTAMSPQELLASNAVAVTFGEKLLG) the chain is on the extracellular side. A helical membrane pass occupies residues 313–338 (VMAWIMPISVALSTFGGVNGSLFTSS). At 339–364 (RLFFAGAREGHLPSVLAMIHVKRCTP) the chain is on the cytoplasmic side. Residues 365–382 (IPALLFTCISTLLMLVTS) form a helical membrane-spanning segment. Over 383 to 386 (DMYT) the chain is Extracellular. A helical transmembrane segment spans residues 387 to 408 (LINYVGFINYLFYGVTVAGQIV). N395 contacts L-tryptophan. Residues 409–423 (LRWKKPDIPRPIKIN) are Cytoplasmic-facing. The next 2 helical transmembrane spans lie at 424-446 (LLFPIIYLLFWAFLLVFSLWSEP) and 447-466 (VVCGIGLAIMLTGVPVYFLG). The Cytoplasmic segment spans residues 467 to 535 (VYWQHKPKCF…DKDVAGQPQP (69 aa)). Residues 502–535 (SGTEEANEDMEEQQQPMYQPTPTKDKDVAGQPQP) are disordered. Over residues 514-523 (QQQPMYQPTP) the composition is skewed to polar residues.

This sequence belongs to the amino acid-polyamine-organocation (APC) superfamily. L-type amino acid transporter (LAT) (TC 2.A.3.8) family. Disulfide-linked heterodimer composed of the catalytic light chain subunit SLC7A8 and the heavy chain subunit SLC3A2. SLC3A2 acts as chaperones for correct plasma membrane trafficking and stabilization of SLC7A8 and modulates the substrate affinity and specificity of SLC7A8. ICAM-1 associates with the heterodimer SLC3A2/SLC7A8; this interaction regulates SLC7A8 activity. In terms of tissue distribution, strongest expression is observed in kidney and moderate expression in placenta and brain, followed by liver, prostate, testis, ovary, lymph node, thymus, spleen, skeletal muscle and heart. Also expressed in fetal liver as well as in the retinal pigment epithelial cell line ARPE-19 and the intestinal epithelial cell line Caco-2.

It localises to the cell membrane. It is found in the basolateral cell membrane. It catalyses the reaction L-histidine(in) + L-phenylalanine(out) = L-histidine(out) + L-phenylalanine(in). It carries out the reaction L-tryptophan(in) + L-phenylalanine(out) = L-tryptophan(out) + L-phenylalanine(in). The enzyme catalyses L-isoleucine(in) + L-phenylalanine(out) = L-isoleucine(out) + L-phenylalanine(in). The catalysed reaction is L-valine(in) + L-phenylalanine(out) = L-valine(out) + L-phenylalanine(in). It catalyses the reaction L-leucine(in) + L-phenylalanine(out) = L-leucine(out) + L-phenylalanine(in). It carries out the reaction L-glutamine(in) + L-phenylalanine(out) = L-glutamine(out) + L-phenylalanine(in). The enzyme catalyses L-cysteine(in) + L-phenylalanine(out) = L-cysteine(out) + L-phenylalanine(in). The catalysed reaction is L-phenylalanine(out) + L-methionine(in) = L-phenylalanine(in) + L-methionine(out). It catalyses the reaction L-leucine(out) + L-methionine(in) = L-leucine(in) + L-methionine(out). It carries out the reaction L-cysteine(out) + L-methionine(in) = L-cysteine(in) + L-methionine(out). The enzyme catalyses S-methylmercury-L-cysteine(out) + L-methionine(in) = S-methylmercury-L-cysteine(in) + L-methionine(out). The catalysed reaction is S-methylmercury-L-cysteine(in) + L-leucine(out) = S-methylmercury-L-cysteine(out) + L-leucine(in). It catalyses the reaction S-methylmercury-L-cysteine(in) + L-phenylalanine(out) = S-methylmercury-L-cysteine(out) + L-phenylalanine(in). It carries out the reaction L-phenylalanine(out) + L-serine(in) = L-phenylalanine(in) + L-serine(out). The enzyme catalyses L-phenylalanine(out) + glycine(in) = L-phenylalanine(in) + glycine(out). The catalysed reaction is L-phenylalanine(out) + L-alanine(in) = L-phenylalanine(in) + L-alanine(out). It catalyses the reaction 3,3'-diiodo-L-thyronine(out) = 3,3'-diiodo-L-thyronine(in). It carries out the reaction 3,3',5-triiodo-L-thyronine(out) = 3,3',5-triiodo-L-thyronine(in). The enzyme catalyses L-dopa(out) + L-phenylalanine(in) = L-dopa(in) + L-phenylalanine(out). With respect to regulation, inhibited by the L-type inhibitor 2-Aminobicyclo-(2,2,1)-heptane-2-carboxylic acid (BCH). In terms of biological role, associates with SLC3A2 to form a functional heterodimeric complex that translocates small and large neutral amino acids with broad specificity and a stoichiometry of 1:1. Functions as amino acid antiporter mediating the influx of extracellular essential amino acids mainly in exchange with the efflux of highly concentrated intracellular amino acids. Has relatively symmetrical selectivities but strongly asymmetrical substrate affinities at both the intracellular and extracellular sides of the transporter. This asymmetry allows SLC7A8 to regulate intracellular amino acid pools (mM concentrations) by exchange with external amino acids (uM concentration range), equilibrating the relative concentrations of different amino acids across the plasma membrane instead of mediating their net uptake. May play an essential role in the reabsorption of neutral amino acids from the epithelial cells to the bloodstream in the kidney. Involved in the uptake of methylmercury (MeHg) when administered as the L-cysteine or D,L-homocysteine complexes, and hence plays a role in metal ion homeostasis and toxicity. Involved in the cellular activity of small molecular weight nitrosothiols, via the stereoselective transport of L-nitrosocysteine (L-CNSO) across the transmembrane. Imports the thyroid hormone diiodothyronine (T2) and to a smaller extent triiodothyronine (T3) but not rT 3 or thyroxine (T4). Mediates the uptake of L-DOPA. May participate in auditory function. The protein is Large neutral amino acids transporter small subunit 2 of Homo sapiens (Human).